A 143-amino-acid polypeptide reads, in one-letter code: MFINEYFHNIDSKGRVIMPSKFRDEIGEEFYITKGMDECLFVYPVSAFIQMTEKLNKLSLTRRQARAFSRVFFSGASNQEIDKQGRFLIPQSLRSYADIKKEVAIIGVSNRIEIWDKEKWEQYSNDSSLNYDDLADGLNDLDL.

2 SpoVT-AbrB domains span residues 5 to 47 and 76 to 119; these read EYFH…PVSA and ASNQ…DKEK.

The protein belongs to the MraZ family. As to quaternary structure, forms oligomers.

Its subcellular location is the cytoplasm. The protein resides in the nucleoid. This Finegoldia magna (strain ATCC 29328 / DSM 20472 / WAL 2508) (Peptostreptococcus magnus) protein is Transcriptional regulator MraZ.